A 201-amino-acid chain; its full sequence is Large ribosomal subunit protein uL4 (201 aa).

Residues 44-73 (RAQKSRAEVKASRKKPWRQKGTGRARAGSV) are disordered. The span at 55–66 (SRKKPWRQKGTG) shows a compositional bias: basic residues.

This sequence belongs to the universal ribosomal protein uL4 family. Part of the 50S ribosomal subunit.

Functionally, one of the primary rRNA binding proteins, this protein initially binds near the 5'-end of the 23S rRNA. It is important during the early stages of 50S assembly. It makes multiple contacts with different domains of the 23S rRNA in the assembled 50S subunit and ribosome. Its function is as follows. Forms part of the polypeptide exit tunnel. This is Large ribosomal subunit protein uL4 from Hamiltonella defensa subsp. Acyrthosiphon pisum (strain 5AT).